The following is a 256-amino-acid chain: Trypsinogen-like protein 3 (256 aa).

The N-terminal stretch at 1 to 14 (MILLLVLALGLAGA) is a signal peptide. Residues 15–237 (SPLGEYKECP…YNDWIHQVMA (223 aa)) enclose the Peptidase S1 domain. Disulfide bonds link Cys-23-Cys-153, Cys-41-Cys-57, Cys-125-Cys-226, Cys-132-Cys-199, Cys-164-Cys-180, and Cys-189-Cys-213.

This sequence belongs to the peptidase S1 family.

This chain is Trypsinogen-like protein 3 (trp3), found in Pseudopleuronectes americanus (Winter flounder).